A 393-amino-acid chain; its full sequence is S-adenosylmethionine synthase 2 (393 aa).

Residue E9 coordinates Mg(2+). Residue H15 participates in ATP binding. Position 43 (E43) interacts with K(+). Positions 56 and 99 each coordinate L-methionine. ATP-binding positions include D167–K169, S235–F238, D246, R252–K253, A269, K273, and K277. D246 serves as a coordination point for L-methionine. Residue K277 coordinates L-methionine.

It belongs to the AdoMet synthase family. Homotetramer. The cofactor is Mn(2+). It depends on Mg(2+) as a cofactor. Requires Co(2+) as cofactor. K(+) is required as a cofactor.

It is found in the cytoplasm. The catalysed reaction is L-methionine + ATP + H2O = S-adenosyl-L-methionine + phosphate + diphosphate. It participates in amino-acid biosynthesis; S-adenosyl-L-methionine biosynthesis; S-adenosyl-L-methionine from L-methionine: step 1/1. Catalyzes the formation of S-adenosylmethionine from methionine and ATP. The reaction comprises two steps that are both catalyzed by the same enzyme: formation of S-adenosylmethionine (AdoMet) and triphosphate, and subsequent hydrolysis of the triphosphate. This chain is S-adenosylmethionine synthase 2 (METK2), found in Vitis vinifera (Grape).